The sequence spans 269 residues: 4-hydroxy-tetrahydrodipicolinate reductase (269 aa).

NAD(+)-binding positions include 10 to 15, Glu-36, 99 to 101, and 123 to 126; these read GANGRM, GTT, and AANF. Catalysis depends on His-156, which acts as the Proton donor/acceptor. Position 157 (His-157) interacts with (S)-2,3,4,5-tetrahydrodipicolinate. Catalysis depends on Lys-160, which acts as the Proton donor. 166 to 167 provides a ligand contact to (S)-2,3,4,5-tetrahydrodipicolinate; that stretch reads GT.

It belongs to the DapB family.

The protein localises to the cytoplasm. It catalyses the reaction (S)-2,3,4,5-tetrahydrodipicolinate + NAD(+) + H2O = (2S,4S)-4-hydroxy-2,3,4,5-tetrahydrodipicolinate + NADH + H(+). It carries out the reaction (S)-2,3,4,5-tetrahydrodipicolinate + NADP(+) + H2O = (2S,4S)-4-hydroxy-2,3,4,5-tetrahydrodipicolinate + NADPH + H(+). It functions in the pathway amino-acid biosynthesis; L-lysine biosynthesis via DAP pathway; (S)-tetrahydrodipicolinate from L-aspartate: step 4/4. Catalyzes the conversion of 4-hydroxy-tetrahydrodipicolinate (HTPA) to tetrahydrodipicolinate. This Neisseria gonorrhoeae (strain ATCC 700825 / FA 1090) protein is 4-hydroxy-tetrahydrodipicolinate reductase.